We begin with the raw amino-acid sequence, 215 residues long: Adenylate kinase (215 aa).

Position 10–15 (10–15 (GAGKGT)) interacts with ATP. Residues 30–59 (STGDILRDAVSKGTELGKMAKAIMDRGELV) form an NMP region. AMP contacts are provided by residues T31, R36, 57 to 59 (ELV), 82 to 85 (GYPR), and Q89. The LID stretch occupies residues 123 to 160 (NRRVCPNCGKVYNLITLQPKEDEKCDVCGTKLIQRDDD). R124 is a binding site for ATP. Zn(2+) contacts are provided by C127 and C130. 133–134 (VY) serves as a coordination point for ATP. Residues C147 and C150 each coordinate Zn(2+). Residues R157 and R168 each contribute to the AMP site. Position 196 (Q196) interacts with ATP.

Belongs to the adenylate kinase family. In terms of assembly, monomer.

It localises to the cytoplasm. The catalysed reaction is AMP + ATP = 2 ADP. It functions in the pathway purine metabolism; AMP biosynthesis via salvage pathway; AMP from ADP: step 1/1. Catalyzes the reversible transfer of the terminal phosphate group between ATP and AMP. Plays an important role in cellular energy homeostasis and in adenine nucleotide metabolism. The polypeptide is Adenylate kinase (Petrotoga mobilis (strain DSM 10674 / SJ95)).